Consider the following 458-residue polypeptide: Monomethylamine methyltransferase MtmB1 (458 aa).

A non-standard amino acid (pyrrolysine) is located at residue O202.

The protein belongs to the monomethylamine methyltransferase family. Dimer of homotrimers. Can form a complex with MtmC (MtmC1 or MtmC2).

It catalyses the reaction Co(I)-[methylamine-specific corrinoid protein] + methylamine + H(+) = methyl-Co(III)-[methylamine-specific corrinoid protein] + NH4(+). Its pathway is one-carbon metabolism; methanogenesis from methylamine. In terms of biological role, catalyzes the transfer of the methyl group from monomethylamine to the corrinoid cofactor of MtmC (MtmC1 or MtmC2). This Methanosarcina barkeri protein is Monomethylamine methyltransferase MtmB1 (mtmB1).